The sequence spans 973 residues: Mediator of RNA polymerase II transcription subunit 16 (973 aa).

This sequence belongs to the Mediator complex subunit 16 family. Component of the Mediator complex.

Its subcellular location is the nucleus. Component of the Mediator complex, a coactivator involved in the regulated transcription of nearly all RNA polymerase II-dependent genes. Mediator functions as a bridge to convey information from gene-specific regulatory proteins to the basal RNA polymerase II transcription machinery. Mediator is recruited to promoters by direct interactions with regulatory proteins and serves as a scaffold for the assembly of a functional preinitiation complex with RNA polymerase II and the general transcription factors. The polypeptide is Mediator of RNA polymerase II transcription subunit 16 (SIN4) (Candida glabrata (strain ATCC 2001 / BCRC 20586 / JCM 3761 / NBRC 0622 / NRRL Y-65 / CBS 138) (Yeast)).